Consider the following 352-residue polypeptide: UDP-N-acetylglucosamine--N-acetylmuramyl-(pentapeptide) pyrophosphoryl-undecaprenol N-acetylglucosamine transferase 2 (352 aa).

UDP-N-acetyl-alpha-D-glucosamine is bound by residues 11-13, Arg164, Ser194, and Gln289; that span reads SAG.

The protein belongs to the glycosyltransferase 28 family. MurG subfamily.

The protein resides in the cell membrane. It catalyses the reaction di-trans,octa-cis-undecaprenyl diphospho-N-acetyl-alpha-D-muramoyl-L-alanyl-D-glutamyl-meso-2,6-diaminopimeloyl-D-alanyl-D-alanine + UDP-N-acetyl-alpha-D-glucosamine = di-trans,octa-cis-undecaprenyl diphospho-[N-acetyl-alpha-D-glucosaminyl-(1-&gt;4)]-N-acetyl-alpha-D-muramoyl-L-alanyl-D-glutamyl-meso-2,6-diaminopimeloyl-D-alanyl-D-alanine + UDP + H(+). It functions in the pathway cell wall biogenesis; peptidoglycan biosynthesis. Functionally, cell wall formation. Catalyzes the transfer of a GlcNAc subunit on undecaprenyl-pyrophosphoryl-MurNAc-pentapeptide (lipid intermediate I) to form undecaprenyl-pyrophosphoryl-MurNAc-(pentapeptide)GlcNAc (lipid intermediate II). The chain is UDP-N-acetylglucosamine--N-acetylmuramyl-(pentapeptide) pyrophosphoryl-undecaprenol N-acetylglucosamine transferase 2 from Bacillus thuringiensis subsp. konkukian (strain 97-27).